A 113-amino-acid polypeptide reads, in one-letter code: Large ribosomal subunit protein bL17 (113 aa).

This sequence belongs to the bacterial ribosomal protein bL17 family. As to quaternary structure, part of the 50S ribosomal subunit. Contacts protein L32.

This is Large ribosomal subunit protein bL17 from Syntrophomonas wolfei subsp. wolfei (strain DSM 2245B / Goettingen).